The chain runs to 405 residues: Adenylosuccinate synthetase (405 aa).

GTP contacts are provided by residues 12–18 and 40–42; these read GDEGKGK and GHT. Catalysis depends on D13, which acts as the Proton acceptor. 2 residues coordinate Mg(2+): D13 and G40. Residues 13-16, 38-41, T121, R135, Q213, T228, and R297 each bind IMP; these read DEGK and NAGH. H41 acts as the Proton donor in catalysis. 293-299 contacts substrate; it reads TTTGRAR. Residues R299, 325–327, and 390–392 each bind GTP; these read KMD and SAG.

It belongs to the adenylosuccinate synthetase family. As to quaternary structure, homodimer. Mg(2+) is required as a cofactor.

The protein resides in the cytoplasm. The enzyme catalyses IMP + L-aspartate + GTP = N(6)-(1,2-dicarboxyethyl)-AMP + GDP + phosphate + 2 H(+). It participates in purine metabolism; AMP biosynthesis via de novo pathway; AMP from IMP: step 1/2. In terms of biological role, plays an important role in the de novo pathway of purine nucleotide biosynthesis. Catalyzes the first committed step in the biosynthesis of AMP from IMP. This chain is Adenylosuccinate synthetase, found in Deinococcus deserti (strain DSM 17065 / CIP 109153 / LMG 22923 / VCD115).